Consider the following 341-residue polypeptide: Two-component response regulator ORR30 (341 aa).

The 116-residue stretch at 12-127 (RVLVIDDDCS…ELSNIWQHIF (116 aa)) folds into the Response regulatory domain. The residue at position 63 (Asp63) is a 4-aspartylphosphate. Positions 195-254 (DLGKSRLTWTTQLHRQFIAAVNHLGEDKAVPKKILGIMKVKHLTREQVASHLQKYRMQLK) constitute an HTH myb-type domain. The H-T-H motif DNA-binding region spans 225–250 (PKKILGIMKVKHLTREQVASHLQKYR).

This sequence belongs to the ARR family. Type-B subfamily. In terms of processing, two-component system major event consists of a His-to-Asp phosphorelay between a sensor histidine kinase (HK) and a response regulator (RR). In plants, the His-to-Asp phosphorelay involves an additional intermediate named Histidine-containing phosphotransfer protein (HPt). This multistep phosphorelay consists of a His-Asp-His-Asp sequential transfer of a phosphate group between first a His and an Asp of the HK protein, followed by the transfer to a conserved His of the HPt protein and finally the transfer to an Asp in the receiver domain of the RR protein.

Its subcellular location is the nucleus. In terms of biological role, transcriptional activator that acts as a floral inducer to promote short-day (SD) flowering pathway. Activates HD3A and other FT-like genes independently from HD1. May also activate MADS-box transcription factors involved in flowering regulation. Functions as a response regulator involved in His-to-Asp phosphorelay signal transduction system. Phosphorylation of the Asp residue in the receiver domain activates the ability of the protein to promote the transcription of target genes. May directly activate some type-A response regulators in response to cytokinins. The sequence is that of Two-component response regulator ORR30 from Oryza sativa subsp. japonica (Rice).